We begin with the raw amino-acid sequence, 401 residues long: MEKKKVVLAYSGGLDTSVAIKWLQEKNYDIIALCLDLGEGKDLAFVKEKALSVGAIKSYMIDVQEEFANEYALMAMQAHTLYEGKYPLVSALSRPLIAKKLVEIAEQEGATAVAHGCTGKGNDQVRFEVSIQALNPYLEVIAPVREWKWSREEEIAYAKENNVPIPINLDSPFSIDQNLWGRSNECGILEDPWAAPPEDAYEMTLALEDTPNKPEFVEIGFEAGVPTTLNGTAYPLSELIKTLNALAGKHGVGRIDHVENRLVGIKSREVYECPAAMTLITAHKELEDLTLVKEVAHFKPMIEQKITELIYNGLWFSPLKQALHAFLQETQKNVTGTVRVKLFKGHAIVEGRKSEYSLYDEKLATYTAQDEFNHDAAVGFISLFGLPTKVYSQVNQKKVEA.

Position 9 to 17 (9 to 17 (AYSGGLDTS)) interacts with ATP. Tyr86 lines the L-citrulline pocket. An ATP-binding site is contributed by Gly116. L-aspartate contacts are provided by Thr118, Asn122, and Asp123. An L-citrulline-binding site is contributed by Asn122. Residues Arg126, Ser174, Ser183, Glu259, and Tyr271 each coordinate L-citrulline.

The protein belongs to the argininosuccinate synthase family. Type 1 subfamily. In terms of assembly, homotetramer.

The protein resides in the cytoplasm. The enzyme catalyses L-citrulline + L-aspartate + ATP = 2-(N(omega)-L-arginino)succinate + AMP + diphosphate + H(+). Its pathway is amino-acid biosynthesis; L-arginine biosynthesis; L-arginine from L-ornithine and carbamoyl phosphate: step 2/3. This Bacillus anthracis (strain A0248) protein is Argininosuccinate synthase.